A 388-amino-acid chain; its full sequence is Chorismate synthase (388 aa).

NADP(+) contacts are provided by R39 and R45. Residues 130-132 (RSS), 251-252 (NA), G296, 311-315 (KPIPT), and R337 contribute to the FMN site.

The protein belongs to the chorismate synthase family. Homotetramer. FMNH2 serves as cofactor.

It catalyses the reaction 5-O-(1-carboxyvinyl)-3-phosphoshikimate = chorismate + phosphate. Its pathway is metabolic intermediate biosynthesis; chorismate biosynthesis; chorismate from D-erythrose 4-phosphate and phosphoenolpyruvate: step 7/7. Functionally, catalyzes the anti-1,4-elimination of the C-3 phosphate and the C-6 proR hydrogen from 5-enolpyruvylshikimate-3-phosphate (EPSP) to yield chorismate, which is the branch point compound that serves as the starting substrate for the three terminal pathways of aromatic amino acid biosynthesis. This reaction introduces a second double bond into the aromatic ring system. The sequence is that of Chorismate synthase from Streptococcus agalactiae serotype V (strain ATCC BAA-611 / 2603 V/R).